A 396-amino-acid polypeptide reads, in one-letter code: Phosphoglycerate kinase (396 aa).

Substrate contacts are provided by residues 19-21 (DFN), Arg-35, 58-61 (HLGR), Arg-117, and Arg-150. ATP is bound by residues Lys-201, Glu-323, and 349–352 (GGDT).

The protein belongs to the phosphoglycerate kinase family. As to quaternary structure, monomer.

It is found in the cytoplasm. It carries out the reaction (2R)-3-phosphoglycerate + ATP = (2R)-3-phospho-glyceroyl phosphate + ADP. It participates in carbohydrate degradation; glycolysis; pyruvate from D-glyceraldehyde 3-phosphate: step 2/5. This chain is Phosphoglycerate kinase, found in Desulfosudis oleivorans (strain DSM 6200 / JCM 39069 / Hxd3) (Desulfococcus oleovorans).